We begin with the raw amino-acid sequence, 196 residues long: Holliday junction branch migration complex subunit RuvA (196 aa).

Residues 1–63 (MINKIYGKVI…ENELKLFGFL (63 aa)) form a domain I region. Residues 64 to 139 (NSDERETFKS…KLLINNELES (76 aa)) are domain II. Position 139 (Ser139) is a region of interest, flexible linker. The domain III stretch occupies residues 139–196 (SSLFRFKELEESIVSMGFDRKIVNSKLKEAFNLVEFSNLKDSEKEQFLFKEVLKRMSN).

It belongs to the RuvA family. As to quaternary structure, homotetramer. Forms an RuvA(8)-RuvB(12)-Holliday junction (HJ) complex. HJ DNA is sandwiched between 2 RuvA tetramers; dsDNA enters through RuvA and exits via RuvB. An RuvB hexamer assembles on each DNA strand where it exits the tetramer. Each RuvB hexamer is contacted by two RuvA subunits (via domain III) on 2 adjacent RuvB subunits; this complex drives branch migration. In the full resolvosome a probable DNA-RuvA(4)-RuvB(12)-RuvC(2) complex forms which resolves the HJ.

The protein resides in the cytoplasm. Its function is as follows. The RuvA-RuvB-RuvC complex processes Holliday junction (HJ) DNA during genetic recombination and DNA repair, while the RuvA-RuvB complex plays an important role in the rescue of blocked DNA replication forks via replication fork reversal (RFR). RuvA specifically binds to HJ cruciform DNA, conferring on it an open structure. The RuvB hexamer acts as an ATP-dependent pump, pulling dsDNA into and through the RuvAB complex. HJ branch migration allows RuvC to scan DNA until it finds its consensus sequence, where it cleaves and resolves the cruciform DNA. This chain is Holliday junction branch migration complex subunit RuvA, found in Borreliella afzelii (strain PKo) (Borrelia afzelii).